A 341-amino-acid polypeptide reads, in one-letter code: Methionine import ATP-binding protein MetN (341 aa).

The 239-residue stretch at 9–247 (ISVEQLNKEI…PQSAITEELF (239 aa)) folds into the ABC transporter domain. 41-48 (GHSGSGKS) is an ATP binding site.

This sequence belongs to the ABC transporter superfamily. Methionine importer (TC 3.A.1.24) family. In terms of assembly, the complex is composed of two ATP-binding proteins (MetN), two transmembrane proteins (MetI) and a solute-binding protein (MetQ).

It is found in the cell inner membrane. It catalyses the reaction L-methionine(out) + ATP + H2O = L-methionine(in) + ADP + phosphate + H(+). The catalysed reaction is D-methionine(out) + ATP + H2O = D-methionine(in) + ADP + phosphate + H(+). Part of the ABC transporter complex MetNIQ involved in methionine import. Responsible for energy coupling to the transport system. In Chlamydia abortus (strain DSM 27085 / S26/3) (Chlamydophila abortus), this protein is Methionine import ATP-binding protein MetN.